We begin with the raw amino-acid sequence, 257 residues long: Nickel import system ATP-binding protein NikD (257 aa).

The ABC transporter domain maps to 4–245 (IDIQNLTIKN…HLHPYTERLI (242 aa)). 37–44 (GESGAGKS) contacts ATP.

This sequence belongs to the ABC transporter superfamily. The complex is composed of two ATP-binding proteins (NikD and NikE), two transmembrane proteins (NikB and NikC) and a solute-binding protein (NikA).

The protein localises to the cell membrane. It carries out the reaction Ni(2+)(out) + ATP + H2O = Ni(2+)(in) + ADP + phosphate + H(+). Functionally, part of the ABC transporter complex NikABCDE (Opp2) involved in nickel import. Probably responsible for energy coupling to the transport system. This is Nickel import system ATP-binding protein NikD from Staphylococcus aureus (strain MRSA252).